A 408-amino-acid polypeptide reads, in one-letter code: MSTETTTGNSSLIPASSSSSSSDAIDPAPLLFNGDDNEGNNGGGGGERRSVRRQGLREAARFLSRASSGRVMREPSMLVREAAAEQLEERQSDWAYSKPVVVLDIVWNLAFVSVATAILVMSRKEHPIMPLRVWLLGYALQCVLHMVCVCVEYRRRNRRRTNRTTTTTPPRSRSSSSSSSSSSLEEEALGSRRNSGVQDLSLGHLDTESSSVAKHLESANTMFSFIWWIIGFYWVSAGGQELAQESPRIYWLSIVFLGFDVFFVVFCVALACVIGIAVCCCLPCIIAVLYAVADQEGASKEDIEQLTKFKFRKLGDANKHTNDEAQGTTEGIMTECGTDSPIEHTLLQEDAECCICLSAYEDGTELRELPCGHHFHCSCVDKWLYINATCPLCKYNILKSSNLDREEV.

The interval 1 to 52 (MSTETTTGNSSLIPASSSSSSSDAIDPAPLLFNGDDNEGNNGGGGGERRSVR) is disordered. Over residues 10–34 (SSLIPASSSSSSSDAIDPAPLLFNG) the composition is skewed to low complexity. 2 helical membrane-spanning segments follow: residues 100-120 (VVVL…AILV) and 133-153 (VWLL…CVEY). A disordered region spans residues 160 to 195 (RTNRTTTTTPPRSRSSSSSSSSSSLEEEALGSRRNS). Low complexity predominate over residues 163–183 (RTTTTTPPRSRSSSSSSSSSS). 3 helical membrane passes run 219 to 239 (ANTM…SAGG), 254 to 274 (IVFL…ACVI), and 275 to 295 (GIAV…VADQ). An RING-type; atypical zinc finger spans residues 353–394 (CCICLSAYEDGTELRELPCGHHFHCSCVDKWLYINATCPLCK).

Its subcellular location is the membrane. The catalysed reaction is S-ubiquitinyl-[E2 ubiquitin-conjugating enzyme]-L-cysteine + [acceptor protein]-L-lysine = [E2 ubiquitin-conjugating enzyme]-L-cysteine + N(6)-ubiquitinyl-[acceptor protein]-L-lysine.. Its pathway is protein modification; protein ubiquitination. In terms of biological role, mediates E2-dependent protein ubiquitination in vitro. The chain is E3 ubiquitin-protein ligase At1g12760 from Arabidopsis thaliana (Mouse-ear cress).